Reading from the N-terminus, the 1721-residue chain is Intersectin-1 (1721 aa).

The 89-residue stretch at 21-109 folds into the EH 1 domain; it reads ERAKHDQQFH…PVMKQQPVAI (89 aa). The region spanning 53–88 is the EF-hand 1 domain; it reads LPQPVLAQIWALADMNNDGRMDQVEFSIAMKLIKLK. Residues aspartate 66, asparagine 68, aspartate 70, arginine 72, and glutamate 77 each contribute to the Ca(2+) site. The residue at position 203 (serine 203) is a Phosphoserine. The EH 2 domain occupies 221–310; it reads SRLKYRQLFN…PEYIPPSFRR (90 aa). Positions 254-289 constitute an EF-hand 2 domain; that stretch reads LPQAQLASIWNLSDIDQDGKLTAEEFILAMHLIDVA. Aspartate 267, aspartate 269, aspartate 271, lysine 273, and glutamate 278 together coordinate Ca(2+). Serine 318 carries the phosphoserine modification. Disordered regions lie at residues 322 to 348 and 650 to 701; these read STSV…KLPV and QRRA…KQEA. The interval 326–702 is KLERQ; sequence DQRLPEEPVL…GEEKGKQEAQ (377 aa). Residues 355 to 659 are a coiled coil; sequence RENFERGNLE…QRRAQERDKQ (305 aa). Residue serine 687 is modified to Phosphoserine. Residues 740–806 enclose the SH3 1 domain; the sequence is VKVVYYRALY…PANYAEKIPE (67 aa). A disordered region spans residues 836–868; it reads LAVTSSEPSTTPNNWADFSSTWPTSTNEKPETD. The segment covering 838–862 has biased composition (polar residues); that stretch reads VTSSEPSTTPNNWADFSSTWPTSTN. Threonine 897 bears the Phosphothreonine mark. 3 positions are modified to phosphoserine: serine 901, serine 902, and serine 904. The region spanning 913-971 is the SH3 2 domain; the sequence is VEGLQAQALYPWRAKKDNHLNFNKNDVITVLEQQDMWWFGEVQGQKGWFPKSYVKLISG. Phosphoserine occurs at positions 978, 986, and 995. 2 consecutive SH3 domains span residues 1002 to 1060 and 1074 to 1138; these read VSGE…LKDS and KKPE…LLSP. The tract at residues 1074-1138 is required for interaction with FCHSD2; the sequence is KKPEIAQVIA…PANYVKLLSP (65 aa). The Bipartite nuclear localization signal; in isoform 2 signature appears at 1104 to 1127; it reads RKKNPGGWWEGELQARGKKRQIGW. Serine 1137 bears the Phosphoserine mark. Threonine 1144 bears the Phosphothreonine mark. The SH3 5 domain maps to 1155 to 1214; the sequence is AAVCQVIGMYDYTAQNDDELAFNKGQIINVLNKEDPDWWKGEVNGQVGLFPSNYVKLTTD. Residues 1237 to 1423 form the DH domain; sequence KRQGYIHELI…EELCSQVNEG (187 aa). Positions 1462-1571 constitute a PH domain; that stretch reads KFLHSGKLYK…WVQKIKAASE (110 aa). Residues 1579-1695 enclose the C2 domain; sequence KKREKAYLVR…KKDQGSKGPV (117 aa). Position 1645 is a phosphoserine (serine 1645). Positions 1667, 1670, and 1673 each coordinate Ca(2+).

As to quaternary structure, interacts (via DH domain) with CDC42. Interacts (via SH3 domain 1) with WASL. Interacts with dynamin, SNAP25 and SNAP23. Interacts with clathrin-associated proteins and other components of the endocytic machinery, such as SPIN90, EPS15, EPN1, EPN2, STON2, FCHO1, FCHO2 and DAB2. Interacts (via SH3 domains) with REPS1 and SGIP1. Interacts with ARHGAP31. Interacts with ADAM15. Interacts with PRRT2. Interacts (via SH3 domain 4) with FCHSD2 (via SH3 domain 2). Interacts (via SH3 domain 1) with DENND2B. Interacts (via SH3 domains) with CBL. Isoform 2: Interacts with CBL and DNM1. Isoform 2: Interacts with LMNA. Isoform 2: Interacts with importin subunit KPNA1; this is likely to mediate its import into the nucleus. Interacts with DNM2. (Microbial infection) Interacts with vaccinia virus protein A36. It depends on Ca(2+) as a cofactor. Isoform 1 is expressed almost exclusively in the brain. Isoform 2 is detected in brain, spleen, lung, liver, heart, skeletal muscle and kidney. Isoform 5 is primarily expressed in brain, spleen, lung and kidney (at protein level). Isoform 1 and isoform 2 are detected in brain. Isoform 2 is ubiquitous in adult and fetal tissues with high expression in skeletal muscle, heart, spleen, ovary, testis and all fetal tissues tested and low expression in thymus, blood, lung, liver and pancreas. Isoform 1 is expressed almost exclusively in the brain, in all brain regions. Not expressed in the spinal cord.

It is found in the endomembrane system. The protein resides in the synapse. The protein localises to the synaptosome. It localises to the cell projection. Its subcellular location is the lamellipodium. It is found in the cell membrane. The protein resides in the membrane. The protein localises to the clathrin-coated pit. It localises to the recycling endosome. Its subcellular location is the endosome. It is found in the cytoplasmic vesicle. The protein resides in the cytoplasm. The protein localises to the nucleus envelope. Functionally, adapter protein that provides a link between the endocytic membrane traffic and the actin assembly machinery. Acts as a guanine nucleotide exchange factor (GEF) for CDC42, and thereby stimulates actin nucleation mediated by WASL and the ARP2/3 complex. Plays a role in the assembly and maturation of clathrin-coated vesicles. Recruits FCHSD2 to clathrin-coated pits. Involved in endocytosis of activated EGFR, and probably also other growth factor receptors. Involved in endocytosis of integrin beta-1 (ITGB1) and transferrin receptor (TFR); internalization of ITGB1 as DAB2-dependent cargo but not TFR may involve association with DAB2. Promotes ubiquitination and subsequent degradation of EGFR, and thereby contributes to the down-regulation of EGFR-dependent signaling pathways. In chromaffin cells, required for normal exocytosis of catecholamines. Required for rapid replenishment of release-ready synaptic vesicles at presynaptic active zones. Inhibits ARHGAP31 activity toward RAC1. In terms of biological role, plays a role in synaptic vesicle endocytosis in brain neurons. In Homo sapiens (Human), this protein is Intersectin-1.